Consider the following 371-residue polypeptide: Putative glutamate--cysteine ligase 2 (371 aa).

It belongs to the glutamate--cysteine ligase type 2 family. YbdK subfamily. In terms of assembly, homodimer.

It carries out the reaction L-cysteine + L-glutamate + ATP = gamma-L-glutamyl-L-cysteine + ADP + phosphate + H(+). In terms of biological role, ATP-dependent carboxylate-amine ligase which exhibits weak glutamate--cysteine ligase activity. The chain is Putative glutamate--cysteine ligase 2 from Klebsiella pneumoniae (strain 342).